The following is a 189-amino-acid chain: MTEYKLVVVGAGGVGKSALTIQLIQNHFVDEYDPTIEDSYRKQVVIDGETCLLDILDTAGQEEYSAMRDQYMRTGEGFLLVFAVNSAKSFEDIGTYREQIKRVKDAEEVPMVLVGNKCDLASWNVQNEQAREVAKQYGIPYIETSAKTRMGVDDAFYTLVREIRKDKDNKGRKGRKTNKPNRRFKCKML.

10–17 contacts GTP; sequence GAGGVGKS. The Effector region motif lies at 32 to 40; sequence YDPTIEDSY. GTP is bound by residues 57–61 and 116–119; these read DTAGQ and NKCD. A Cysteine methyl ester modification is found at cysteine 186. Cysteine 186 carries the S-geranylgeranyl cysteine lipid modification. Residues 187–189 constitute a propeptide, removed in mature form; it reads KML.

The protein belongs to the small GTPase superfamily. Ras family.

The protein resides in the cell membrane. It carries out the reaction GTP + H2O = GDP + phosphate + H(+). Its activity is regulated as follows. Alternates between an inactive form bound to GDP and an active form bound to GTP. Activated by a guanine nucleotide-exchange factor (GEF) and inactivated by a GTPase-activating protein (GAP). Its function is as follows. Ras proteins bind GDP/GTP and possess intrinsic GTPase activity. Plays a role in eye development by regulating cell growth, survival of postmitotic ommatidial cells and differentiation of photoreceptor cells. During larval development, mediates Ptth/tor signaling leading to the production of ecdysone, a hormone required for the initiation of metamorphosis. The sequence is that of Ras-like protein 1 from Drosophila virilis (Fruit fly).